The sequence spans 279 residues: NADPH-dependent 7-cyano-7-deazaguanine reductase (279 aa).

Position 86 to 88 (86 to 88 (IES)) interacts with substrate. 88–89 (SK) contacts NADPH. Cys-187 (thioimide intermediate) is an active-site residue. Asp-194 (proton donor) is an active-site residue. Residue 226–227 (HE) participates in substrate binding. 255-256 (RG) lines the NADPH pocket.

It belongs to the GTP cyclohydrolase I family. QueF type 2 subfamily. As to quaternary structure, homodimer.

The protein localises to the cytoplasm. It carries out the reaction 7-aminomethyl-7-carbaguanine + 2 NADP(+) = 7-cyano-7-deazaguanine + 2 NADPH + 3 H(+). Its pathway is tRNA modification; tRNA-queuosine biosynthesis. Its function is as follows. Catalyzes the NADPH-dependent reduction of 7-cyano-7-deazaguanine (preQ0) to 7-aminomethyl-7-deazaguanine (preQ1). The sequence is that of NADPH-dependent 7-cyano-7-deazaguanine reductase from Glaesserella parasuis serovar 5 (strain SH0165) (Haemophilus parasuis).